A 313-amino-acid polypeptide reads, in one-letter code: Aspartate carbamoyltransferase catalytic subunit (313 aa).

Carbamoyl phosphate is bound by residues Arg51 and Thr52. Lys80 contacts L-aspartate. Carbamoyl phosphate contacts are provided by Arg101, His129, and Gln132. The L-aspartate site is built by Arg162 and Arg224. Carbamoyl phosphate-binding residues include Leu263 and Pro264.

This sequence belongs to the aspartate/ornithine carbamoyltransferase superfamily. ATCase family. As to quaternary structure, heterododecamer (2C3:3R2) of six catalytic PyrB chains organized as two trimers (C3), and six regulatory PyrI chains organized as three dimers (R2).

The catalysed reaction is carbamoyl phosphate + L-aspartate = N-carbamoyl-L-aspartate + phosphate + H(+). Its pathway is pyrimidine metabolism; UMP biosynthesis via de novo pathway; (S)-dihydroorotate from bicarbonate: step 2/3. Catalyzes the condensation of carbamoyl phosphate and aspartate to form carbamoyl aspartate and inorganic phosphate, the committed step in the de novo pyrimidine nucleotide biosynthesis pathway. The polypeptide is Aspartate carbamoyltransferase catalytic subunit (Phocaeicola vulgatus (strain ATCC 8482 / DSM 1447 / JCM 5826 / CCUG 4940 / NBRC 14291 / NCTC 11154) (Bacteroides vulgatus)).